We begin with the raw amino-acid sequence, 544 residues long: Chaperonin GroEL (544 aa).

Residues 30–33 (TLGP), K51, 87–91 (DGTTT), G415, and D495 contribute to the ATP site.

The protein belongs to the chaperonin (HSP60) family. In terms of assembly, forms a cylinder of 14 subunits composed of two heptameric rings stacked back-to-back. Interacts with the co-chaperonin GroES.

The protein resides in the cytoplasm. It catalyses the reaction ATP + H2O + a folded polypeptide = ADP + phosphate + an unfolded polypeptide.. Together with its co-chaperonin GroES, plays an essential role in assisting protein folding. The GroEL-GroES system forms a nano-cage that allows encapsulation of the non-native substrate proteins and provides a physical environment optimized to promote and accelerate protein folding. The protein is Chaperonin GroEL of Neisseria meningitidis serogroup A / serotype 4A (strain DSM 15465 / Z2491).